We begin with the raw amino-acid sequence, 143 residues long: Large ribosomal subunit protein uL11 (143 aa).

It belongs to the universal ribosomal protein uL11 family. Part of the ribosomal stalk of the 50S ribosomal subunit. Interacts with L10 and the large rRNA to form the base of the stalk. L10 forms an elongated spine to which L12 dimers bind in a sequential fashion forming a multimeric L10(L12)X complex. Post-translationally, one or more lysine residues are methylated.

Its function is as follows. Forms part of the ribosomal stalk which helps the ribosome interact with GTP-bound translation factors. This Cutibacterium acnes (strain DSM 16379 / KPA171202) (Propionibacterium acnes) protein is Large ribosomal subunit protein uL11.